The primary structure comprises 94 residues: Small ribosomal subunit protein uS19 (94 aa).

The tract at residues 73–94 (EFAPTRTYRGHGKDAERTTRRR) is disordered. The span at 83–94 (HGKDAERTTRRR) shows a compositional bias: basic and acidic residues.

It belongs to the universal ribosomal protein uS19 family.

Its function is as follows. Protein S19 forms a complex with S13 that binds strongly to the 16S ribosomal RNA. This is Small ribosomal subunit protein uS19 from Thermomicrobium roseum (strain ATCC 27502 / DSM 5159 / P-2).